We begin with the raw amino-acid sequence, 327 residues long: Lipoyl synthase (327 aa).

[4Fe-4S] cluster-binding residues include Cys-66, Cys-71, Cys-77, Cys-92, Cys-96, Cys-99, and Ser-306. Positions 78 to 295 (FSKGTATFMI…EKEAYELGFS (218 aa)) constitute a Radical SAM core domain.

This sequence belongs to the radical SAM superfamily. Lipoyl synthase family. [4Fe-4S] cluster serves as cofactor.

The protein resides in the cytoplasm. It carries out the reaction [[Fe-S] cluster scaffold protein carrying a second [4Fe-4S](2+) cluster] + N(6)-octanoyl-L-lysyl-[protein] + 2 oxidized [2Fe-2S]-[ferredoxin] + 2 S-adenosyl-L-methionine + 4 H(+) = [[Fe-S] cluster scaffold protein] + N(6)-[(R)-dihydrolipoyl]-L-lysyl-[protein] + 4 Fe(3+) + 2 hydrogen sulfide + 2 5'-deoxyadenosine + 2 L-methionine + 2 reduced [2Fe-2S]-[ferredoxin]. It participates in protein modification; protein lipoylation via endogenous pathway; protein N(6)-(lipoyl)lysine from octanoyl-[acyl-carrier-protein]: step 2/2. Functionally, catalyzes the radical-mediated insertion of two sulfur atoms into the C-6 and C-8 positions of the octanoyl moiety bound to the lipoyl domains of lipoate-dependent enzymes, thereby converting the octanoylated domains into lipoylated derivatives. The protein is Lipoyl synthase of Neisseria meningitidis serogroup B (strain ATCC BAA-335 / MC58).